A 921-amino-acid chain; its full sequence is Collagen alpha-1(IX) chain (921 aa).

A signal peptide spans 1–23; that stretch reads MKNFWKISVFFCVCSCLGPWVSA. Positions 24 to 268 are nonhelical region (NC4); it reads TLKRRARFPA…ITTSQTTDER (245 aa). Disulfide bonds link C44-C242 and C198-C252. A Laminin G-like domain is found at 50–244; that stretch reads GQDDLPGFDL…LQWMLIHCDP (195 aa). The Zn(2+) site is built by D213, D215, and H253. Disordered stretches follow at residues 253-759 and 783-921; these read HELP…APTD and RPDT…GPDK. 8 consecutive Collagen-like domains span residues 269–325, 326–356, 358–403, 416–472, 473–512, 604–656, 657–711, and 712–755; these read GPPG…PGAD, GLTG…GFPG, GIPG…GTIG, PPGR…GLRG, ITGI…PPGE, GKPG…LPGP, PGLP…PGEP, and GLRG…PPGR. Residues 269 to 405 form a triple-helical region (COL3) region; the sequence is GPPGEQGPPG…PGPSGTIGFH (137 aa). Pro residues-rich tracts occupy residues 273–285 and 298–310; these read EQGP…PPGV and KGPP…PGDP. The segment covering 368–383 has biased composition (low complexity); the sequence is TTGLPGELGRVGPIGD. The segment covering 387–398 has biased composition (pro residues); that stretch reads RGPPGPPGPPGP. Positions 406 to 417 are nonhelical region (NC3); that stretch reads DGDPLCPNSCPP. The interval 418–756 is triple-helical region (COL2); it reads GRSGYPGLPG…PGIQGPPGRA (339 aa). The span at 479–489 shows a compositional bias: basic and acidic residues; sequence DKGEKGARGFD. Low complexity-rich tracts occupy residues 594 to 632 and 639 to 650; these read PGKP…PVGP and PGKLGSVGSPGL. Residues 757 to 786 form a nonhelical region (NC2) region; that stretch reads PTDQHIKQVCMRVVQEHFVEMAASLKRPDT. The segment at 787-901 is triple-helical region (COL1); that stretch reads GASGLPGRPG…PGPPGPPGFC (115 aa). Positions 790–847 constitute a Collagen-like 9 domain; it reads GLPGRPGPPGPPGPPGENGFPGQMGIRGLPGIKGPPGALGLRGPKGDLGEKGERGPPG. Pro residues predominate over residues 794–804; sequence RPGPPGPPGPP. Residues 833-845 are compositionally biased toward basic and acidic residues; sequence PKGDLGEKGERGP. A compositionally biased stretch (pro residues) spans 888–900; the sequence is VPGPPGPPGPPGF. Residues 902–921 form a nonhelical region (NC1) region; that stretch reads EPASCTLQSGQRAFSKGPDK.

Belongs to the fibril-associated collagens with interrupted helices (FACIT) family. As to quaternary structure, heterotrimer of an alpha 1(IX), an alpha 2(IX) and an alpha 3(IX) chain. In terms of processing, covalently linked to the telopeptides of type II collagen by lysine-derived cross-links. Post-translationally, prolines at the third position of the tripeptide repeating unit (G-X-Y) are hydroxylated in some or all of the chains.

It is found in the secreted. It localises to the extracellular space. The protein localises to the extracellular matrix. Functionally, structural component of hyaline cartilage and vitreous of the eye. This chain is Collagen alpha-1(IX) chain (Col9a1), found in Mus musculus (Mouse).